The primary structure comprises 73 residues: Putative antitoxin M1627_0365 (73 aa).

It belongs to the UPF0330 family.

Functionally, possibly the antitoxin component of a type II toxin-antitoxin (TA) system. The chain is Putative antitoxin M1627_0365 from Saccharolobus islandicus (strain M.16.27) (Sulfolobus islandicus).